Consider the following 196-residue polypeptide: Protein/nucleic acid deglycase 3 (196 aa).

Residue Cys-106 is the Nucleophile of the active site. Cys-106 bears the Cysteine sulfinic acid (-SO2H); alternate mark.

The protein belongs to the peptidase C56 family. Homodimer. Cys-106 is easily oxidized to sulfinic acid.

The enzyme catalyses N(omega)-(1-hydroxy-2-oxopropyl)-L-arginyl-[protein] + H2O = lactate + L-arginyl-[protein] + H(+). It carries out the reaction N(6)-(1-hydroxy-2-oxopropyl)-L-lysyl-[protein] + H2O = lactate + L-lysyl-[protein] + H(+). It catalyses the reaction S-(1-hydroxy-2-oxopropyl)-L-cysteinyl-[protein] + H2O = lactate + L-cysteinyl-[protein] + H(+). The catalysed reaction is N(omega)-(1-hydroxy-2-oxoethyl)-L-arginyl-[protein] + H2O = L-arginyl-[protein] + glycolate + H(+). The enzyme catalyses N(6)-(1-hydroxy-2-oxoethyl)-L-lysyl-[protein] + H2O = glycolate + L-lysyl-[protein] + H(+). It carries out the reaction S-(1-hydroxy-2-oxoethyl)-L-cysteinyl-[protein] + H2O = glycolate + L-cysteinyl-[protein] + H(+). It catalyses the reaction N(2)-(1-hydroxy-2-oxopropyl)-dGTP + H2O = lactate + dGTP + H(+). The catalysed reaction is N(2)-(1-hydroxy-2-oxopropyl)-GTP + H2O = lactate + GTP + H(+). The enzyme catalyses N(2)-(1-hydroxy-2-oxopropyl)-GDP + H2O = lactate + GDP + H(+). It carries out the reaction N(2)-(1-hydroxy-2-oxopropyl)-GMP + H2O = lactate + GMP + H(+). It catalyses the reaction N(2)-(1-hydroxy-2-oxoethyl)-dGTP + H2O = dGTP + glycolate + H(+). The catalysed reaction is N(2)-(1-hydroxy-2-oxoethyl)-GTP + H2O = glycolate + GTP + H(+). The enzyme catalyses N(2)-(1-hydroxy-2-oxoethyl)-GDP + H2O = glycolate + GDP + H(+). It carries out the reaction N(2)-(1-hydroxy-2-oxoethyl)-GMP + H2O = glycolate + GMP + H(+). It catalyses the reaction an N(2)-(1-hydroxy-2-oxopropyl)-guanosine in RNA + H2O = a guanosine in RNA + lactate + H(+). The catalysed reaction is an N(2)-(1-hydroxy-2-oxopropyl)-2'-deoxyguanosine in DNA + H2O = a 2'-deoxyguanosine in DNA + lactate + H(+). The enzyme catalyses an N(2)-(1-hydroxy-2-oxoethyl)-guanosine in RNA + H2O = a guanosine in RNA + glycolate + H(+). It carries out the reaction an N(2)-(1-hydroxy-2-oxoethyl)-2'-deoxyguanosine in DNA + H2O = a 2'-deoxyguanosine in DNA + glycolate + H(+). Its activity is regulated as follows. Glyoxalase activity is inhibited by zinc ions. Active as a chaperone in both its reduced and oxidized states, and is more active in its oxidized form. Protein and nucleotide deglycase that catalyzes the deglycation of the Maillard adducts formed between amino groups of proteins or nucleotides and reactive carbonyl groups of glyoxals. Thus, functions as a protein deglycase that repairs methylglyoxal- and glyoxal-glycated proteins, and releases repaired proteins and lactate or glycolate, respectively. Deglycates cysteine, arginine and lysine residues in proteins, and thus reactivates these proteins by reversing glycation by glyoxals. Is able to repair glycated serum albumin, collagen, glyceraldehyde-3-phosphate dehydrogenase, and fructose biphosphate aldolase. Acts on early glycation intermediates (hemithioacetals and aminocarbinols), preventing the formation of Schiff bases and advanced glycation endproducts (AGE) that cause irreversible damage. Also functions as a nucleotide deglycase able to repair glycated guanine in the free nucleotide pool (GTP, GDP, GMP, dGTP) and in DNA and RNA. Is thus involved in a major nucleotide repair system named guanine glycation repair (GG repair), dedicated to reversing methylglyoxal and glyoxal damage via nucleotide sanitization and direct nucleic acid repair. However, is less efficient than Hsp31 and YhbO, suggesting that YajL might be preferentially dedicated to protein repair. Displays a covalent chaperone activity with sulfenylated thiol proteins by forming mixed disulfides with members of the thiol proteome, and preferentially with sulfenylated cellular proteins, upon oxidative stress; these mixed disulfides can be subsequently reduced by low-molecular-weight thiols to regenerate YajL and reduced proteins. Involved in biogenesis of ribosomal proteins, probably as a ribosomal protein-folding chaperone. Confers resistance to oxidative stress. Plays an important role in protection against electrophile/carbonyl stress. The chaperone activity reported for YajL is probably recruited to execute its deglycase activity, to interact with non-native glycated proteins and gain access to partially buried glycated sites. Also displays an apparent glyoxalase activity that in fact reflects its deglycase activity. The sequence is that of Protein/nucleic acid deglycase 3 (yajL) from Escherichia coli (strain K12).